The following is a 118-amino-acid chain: MARVKRGVIARRRHKKILKLAKGYYGARSRVFRVAKQAVIKAGQYAYRDRRQRKRQFRALWIARINAGARQNGLSYSRLIAGLKKATIEIDRKVLSDLAVNEKAAFAAIVEKAKAVLA.

The protein belongs to the bacterial ribosomal protein bL20 family.

Its function is as follows. Binds directly to 23S ribosomal RNA and is necessary for the in vitro assembly process of the 50S ribosomal subunit. It is not involved in the protein synthesizing functions of that subunit. This is Large ribosomal subunit protein bL20 from Azotobacter vinelandii (strain DJ / ATCC BAA-1303).